We begin with the raw amino-acid sequence, 432 residues long: 3-phosphoshikimate 1-carboxyvinyltransferase (432 aa).

Residues Lys-22, Ser-23, and Arg-27 each contribute to the 3-phosphoshikimate site. Lys-22 lines the phosphoenolpyruvate pocket. Phosphoenolpyruvate-binding residues include Gly-96 and Arg-127. 3-phosphoshikimate-binding residues include Ser-173, Ser-174, Gln-175, Ser-201, Asp-316, Asn-339, and Lys-343. Gln-175 contributes to the phosphoenolpyruvate binding site. Asp-316 functions as the Proton acceptor in the catalytic mechanism. Residues Arg-347, Arg-391, and Lys-416 each contribute to the phosphoenolpyruvate site.

Belongs to the EPSP synthase family. Monomer.

Its subcellular location is the cytoplasm. It carries out the reaction 3-phosphoshikimate + phosphoenolpyruvate = 5-O-(1-carboxyvinyl)-3-phosphoshikimate + phosphate. Its pathway is metabolic intermediate biosynthesis; chorismate biosynthesis; chorismate from D-erythrose 4-phosphate and phosphoenolpyruvate: step 6/7. Catalyzes the transfer of the enolpyruvyl moiety of phosphoenolpyruvate (PEP) to the 5-hydroxyl of shikimate-3-phosphate (S3P) to produce enolpyruvyl shikimate-3-phosphate and inorganic phosphate. The polypeptide is 3-phosphoshikimate 1-carboxyvinyltransferase (Haemophilus influenzae (strain ATCC 51907 / DSM 11121 / KW20 / Rd)).